We begin with the raw amino-acid sequence, 207 residues long: Guanylate kinase (207 aa).

Positions 5–183 (GTLYIISAPS…ALYELEAIVE (179 aa)) constitute a Guanylate kinase-like domain. An ATP-binding site is contributed by 12–19 (APSGAGKT).

Belongs to the guanylate kinase family.

It is found in the cytoplasm. It carries out the reaction GMP + ATP = GDP + ADP. Functionally, essential for recycling GMP and indirectly, cGMP. The protein is Guanylate kinase of Alcanivorax borkumensis (strain ATCC 700651 / DSM 11573 / NCIMB 13689 / SK2).